Consider the following 98-residue polypeptide: NADH-ubiquinone oxidoreductase chain 4L (98 aa).

3 helical membrane passes run 2 to 22, 26 to 46, and 59 to 79; these read MMAV…TLMF, LMST…ITTI, and IPIV…ALLV.

The protein belongs to the complex I subunit 4L family. Core subunit of respiratory chain NADH dehydrogenase (Complex I) which is composed of 45 different subunits.

Its subcellular location is the mitochondrion inner membrane. The enzyme catalyses a ubiquinone + NADH + 5 H(+)(in) = a ubiquinol + NAD(+) + 4 H(+)(out). In terms of biological role, core subunit of the mitochondrial membrane respiratory chain NADH dehydrogenase (Complex I) which catalyzes electron transfer from NADH through the respiratory chain, using ubiquinone as an electron acceptor. Part of the enzyme membrane arm which is embedded in the lipid bilayer and involved in proton translocation. The protein is NADH-ubiquinone oxidoreductase chain 4L (MT-ND4L) of Phodopus sungorus (Striped hairy-footed hamster).